We begin with the raw amino-acid sequence, 695 residues long: Follicle-stimulating hormone receptor (695 aa).

Residues 1-17 (MALLLVSLLAFMSLGSG) form the signal peptide. 2 cysteine pairs are disulfide-bonded: cysteine 18–cysteine 25 and cysteine 23–cysteine 32. The 29-residue stretch at 18–46 (CHHRLCHCSNRVFLCQESKVTEIPSDLPR) folds into the LRRNT domain. Topologically, residues 18–366 (CHHRLCHCSN…EDIMGYNILR (349 aa)) are extracellular. LRR repeat units lie at residues 49-72 (VELR…FGDL), 73-97 (EKIE…LPNL), 98-118 (HEIR…AFQN), 119-143 (LPNL…KIQS), 144-169 (LQKV…LGLS), 170-192 (SESV…AFNG), 193-216 (TQLD…VFQG), 217-240 (ASGP…GLEN), and 241-259 (LKKL…PSLE). N-linked (GlcNAc...) asparagine glycosylation is found at asparagine 191 and asparagine 199. Disulfide bonds link cysteine 275–cysteine 346, cysteine 276–cysteine 292, cysteine 276–cysteine 356, and cysteine 292–cysteine 338. An N-linked (GlcNAc...) asparagine glycan is attached at asparagine 293. Tyrosine 335 carries the sulfotyrosine modification. Residues 367–387 (VLIWFISILAITGNVAVLVVL) form a helical membrane-spanning segment. The Cytoplasmic segment spans residues 388–398 (TTSQYKLTVPR). A helical membrane pass occupies residues 399–421 (FLMCNLAFADLCIGIYLLLIASV). The Extracellular portion of the chain corresponds to 422–443 (DVHTRTLYHNYAIDWQTGAGCA). A disulfide bridge links cysteine 442 with cysteine 517. Residues 444 to 465 (DCWLFTVFASELSVYTLTAITL) traverse the membrane as a helical segment. At 466–485 (ERWHTITHAMQLDCKVQLRH) the chain is on the cytoplasmic side. A helical transmembrane segment spans residues 486–508 (AASIMVIGWIFSSAAALFPIFGV). Residues 509–528 (SSYMKVSICLPMDIDSPLSQ) are Extracellular-facing. The helical transmembrane segment at 529–550 (LYVMFLLVLNVLAFVVICGCYL) threads the bilayer. The Cytoplasmic segment spans residues 551-573 (HIYLTVRNPNIVSSASDTRIAKR). A helical membrane pass occupies residues 574–597 (MATLIFTDFLCMAPISFFAISASL). The Extracellular portion of the chain corresponds to 598-608 (KVPLITVSKAK). Residues 609–630 (ILLVLFYPINSCANPFLYAIFT) traverse the membrane as a helical segment. The Cytoplasmic segment spans residues 631–695 (KNFRRDLFIL…LAPLNHLAQN (65 aa)). Residues 658–677 (TSSTAHNSHPRNGHSSSVSR) are disordered.

Belongs to the G-protein coupled receptor 1 family. FSH/LSH/TSH subfamily. In terms of assembly, homotrimer. Functions as a homotrimer binding the FSH hormone heterodimer composed of CGA and FSHB. Interacts with ARRB2. Interacts with APPL2; interaction is independent of follicle stimulating hormone stimulation. In terms of processing, N-glycosylated; indirectly required for FSH-binding, possibly via a conformational change that allows high affinity binding of hormone. Post-translationally, sulfated.

Its subcellular location is the cell membrane. Functionally, g protein-coupled receptor for follitropin, the follicle-stimulating hormone. Through cAMP production activates the downstream PI3K-AKT and ERK1/ERK2 signaling pathways. This chain is Follicle-stimulating hormone receptor (FSHR), found in Cavia porcellus (Guinea pig).